A 529-amino-acid chain; its full sequence is DNA-binding protein (529 aa).

Residues 1-17 (MASREEEQRETTPERGR) show a composition bias toward basic and acidic residues. Disordered regions lie at residues 1 to 107 (MASR…IVDS) and 125 to 166 (PVLI…AESE). The segment covering 129–139 (KHGKGGKRTVR) has biased composition (basic residues). Over residues 155–165 (EEEEEPSEAES) the composition is skewed to acidic residues. Tyr195 carries the phosphotyrosine; by host modification. Zn(2+) contacts are provided by Cys284 and His286. Residues 297–331 (IEMDVTSENGQRALKEQSSKAKIVKNRWGRNVVQI) are flexible loop. 6 residues coordinate Zn(2+): Cys339, Cys355, Cys396, Cys398, Cys450, and Cys467. The interval 513-529 (VSLPVAHSDARQNPFDF) is C-terminal arm, DBP binding.

This sequence belongs to the adenoviridae E2A DNA-binding protein family. As to quaternary structure, homomultimerizes on viral ssDNA bound to pTP. Forms a initiation complex with viral polymerase, pTP and hosts NFIA and POU2F1/OCT1. Interacts with host SRCAP.

It is found in the host nucleus. Functionally, plays a role in the elongation phase of viral strand displacement replication by unwinding the template in an ATP-independent fashion, employing its capacity to form multimers. Also enhances the rate of initiation. Released from template upon second strand synthesis. Assembles in complex with viral pTP, viral pol, host NFIA and host POU2F1/OCT1 on viral origin of replication. Covers the whole ssDNA genome during synthesis. The complementary strand synthesis induces its relese from DNA template. May inhibit cellular transcription mediated by the interaction between host SRCAP and CBP. This Human adenovirus C serotype 5 (HAdV-5) protein is DNA-binding protein.